The following is a 511-amino-acid chain: Maturase K (511 aa).

Belongs to the intron maturase 2 family. MatK subfamily.

The protein resides in the plastid. It localises to the chloroplast. Usually encoded in the trnK tRNA gene intron. Probably assists in splicing its own and other chloroplast group II introns. The polypeptide is Maturase K (Mandragora officinarum (Mandrake)).